A 972-amino-acid polypeptide reads, in one-letter code: 116 kDa U5 small nuclear ribonucleoprotein component (972 aa).

Residues methionine 1–proline 53 are disordered. Composition is skewed to acidic residues over residues leucine 17–leucine 26 and aspartate 34–histidine 48. The region spanning glutamate 127–lysine 409 is the tr-type G domain. GTP is bound by residues glycine 136–threonine 143, aspartate 204–histidine 208, and asparagine 258–aspartate 261.

The protein belongs to the TRAFAC class translation factor GTPase superfamily. Classic translation factor GTPase family. EF-G/EF-2 subfamily. As to quaternary structure, component of the U5 snRNP and the U4/U6-U5 tri-snRNP complex, a building block of the spliceosome. Component of the pre-catalytic, catalytic and post-catalytic spliceosome complexes. Component of the minor spliceosome, which splices U12-type introns.

It is found in the nucleus. Its function is as follows. Required for pre-mRNA splicing as component of the spliceosome, including pre-catalytic, catalytic and post-catalytic spliceosomal complexes. Component of the U5 snRNP and the U4/U6-U5 tri-snRNP complex, a building block of the spliceosome. As a component of the minor spliceosome, involved in the splicing of U12-type introns in pre-mRNAs. This Gallus gallus (Chicken) protein is 116 kDa U5 small nuclear ribonucleoprotein component (EFTUD2).